The following is a 561-amino-acid chain: Probable galacturonosyltransferase 9 (561 aa).

The Cytoplasmic segment spans residues 1–27 (MAVAFRGGRGGVGSGQSTGLRSFFSYR). Residues 28–48 (IFISALFSFLFLATFSVVLNS) traverse the membrane as a helical; Signal-anchor for type II membrane protein segment. Over 49-561 (SRHQPHQDHT…EFVQMCNFGL (513 aa)) the chain is Lumenal. N-linked (GlcNAc...) asparagine glycosylation is found at asparagine 124, asparagine 320, asparagine 346, and asparagine 426.

The protein belongs to the glycosyltransferase 8 family. In terms of tissue distribution, expressed in roots, inflorescences, siliques, leaves and stems.

The protein resides in the golgi apparatus membrane. It participates in glycan metabolism; pectin biosynthesis. May be involved in pectin synthesis. The sequence is that of Probable galacturonosyltransferase 9 (GAUT9) from Arabidopsis thaliana (Mouse-ear cress).